We begin with the raw amino-acid sequence, 62 residues long: Large ribosomal subunit protein eL37 (62 aa).

Zn(2+) contacts are provided by Cys-20, Cys-23, Cys-35, and Cys-38. A C4-type zinc finger spans residues 20–38 (CRRCGRRAYHVRKGYCAAC).

The protein belongs to the eukaryotic ribosomal protein eL37 family. Zn(2+) serves as cofactor.

Functionally, binds to the 23S rRNA. This Methanopyrus kandleri (strain AV19 / DSM 6324 / JCM 9639 / NBRC 100938) protein is Large ribosomal subunit protein eL37.